Consider the following 214-residue polypeptide: Probable septum site-determining protein MinC (214 aa).

It belongs to the MinC family. Interacts with MinD and FtsZ.

Its function is as follows. Cell division inhibitor that blocks the formation of polar Z ring septums. Rapidly oscillates between the poles of the cell to destabilize FtsZ filaments that have formed before they mature into polar Z rings. Prevents FtsZ polymerization. This Caldanaerobacter subterraneus subsp. tengcongensis (strain DSM 15242 / JCM 11007 / NBRC 100824 / MB4) (Thermoanaerobacter tengcongensis) protein is Probable septum site-determining protein MinC.